The sequence spans 1816 residues: Kinesin-like protein KIF1B (1816 aa).

Residue Ser2 is modified to N-acetylserine. Residues 5–354 enclose the Kinesin motor domain; the sequence is SVKVAVRVRP…LRYADRAKQI (350 aa). Residue 97–104 participates in ATP binding; sequence GQTGAGKS. The segment at 270-350 is interaction with KIFBP; it reads NINKSLTTLG…TLSTLRYADR (81 aa). Coiled-coil stretches lie at residues 365-386 and 470-502; these read NAKL…LRAQ and GEEA…EAIR. The 57-residue stretch at 556–612 folds into the FHA domain; sequence TRVGQADAERRQDIVLSGAHIKEEHCLFRSERSNTGEVIVTLEPCERSETYVNGKRV. Phosphothreonine occurs at positions 647 and 652. Coiled coils occupy residues 668–737 and 841–869; these read EKQG…EEEV and SLDK…AQDD. 5 positions are modified to phosphoserine: Ser1054, Ser1057, Ser1416, Ser1454, and Ser1487. The disordered stretch occupies residues 1522 to 1571; it reads VPKSLSDSLSPSLSSGTLSTSTSISSQISTTTFESAITPSESSGYDSADV. The span at 1525 to 1553 shows a compositional bias: low complexity; sequence SLSDSLSPSLSSGTLSTSTSISSQISTTT. Over residues 1554-1566 the composition is skewed to polar residues; sequence FESAITPSESSGY. Phosphoserine occurs at positions 1573, 1603, 1610, and 1613. Residues 1620–1637 show a composition bias toward low complexity; sequence SVSSFSSSTLTPSSTCPS. Positions 1620-1659 are disordered; that stretch reads SVSSFSSSTLTPSSTCPSLVDSRSSSMDQKTPEANSRASS. The span at 1640–1659 shows a compositional bias: polar residues; that stretch reads DSRSSSMDQKTPEANSRASS. The PH domain occupies 1702–1799; sequence VSKKGYLHFK…WLYAFNPLLA (98 aa).

Belongs to the TRAFAC class myosin-kinesin ATPase superfamily. Kinesin family. Unc-104 subfamily. In terms of assembly, monomer. Interacts with KIFBP; positively regulates KIF1B microtubule motor activity. Interacts (via C-terminus end of the kinesin-motor domain) with CHP1; the interaction occurs in a calcium-dependent manner. As to quaternary structure, interacts with MADD (via death domain); links this isoform to Rab3-carrying vesicles in anterograde synaptic vesicle transport. As to expression, expressed in the brain (at protein level).

The protein localises to the cytoplasm. It localises to the cytoskeleton. It is found in the cytoplasmic vesicle. The protein resides in the secretory vesicle. Its subcellular location is the synaptic vesicle membrane. The protein localises to the mitochondrion. The catalysed reaction is ATP + H2O + a kinesin associated with a microtubule at position (n) = ADP + phosphate a kinesin associated with a microtubule at position (n+1, toward the plus end).. In terms of biological role, has a plus-end-directed microtubule motor activity and functions as a motor for transport of vesicles and organelles along microtubules. Its function is as follows. Has a plus-end-directed microtubule motor activity and functions as a motor for anterograde synaptic vesicle transport along axonal microtubules from the cell body to the presynapse in neuronal cells. Functions as a downstream effector in a developmental apoptotic pathway that is activated when nerve growth factor (NGF) becomes limiting for neuronal progenitor cells. Functionally, has a plus-end-directed microtubule motor activity and functions as a motor for anterograde transport of mitochondria. This Mus musculus (Mouse) protein is Kinesin-like protein KIF1B.